A 168-amino-acid chain; its full sequence is CASP-like protein 4D1 (168 aa).

Topologically, residues 1 to 11 (MAPPPPSLASR) are cytoplasmic. Residues 12–32 (MAALILRILTFIFLIASLVIL) form a helical membrane-spanning segment. Residues 33–57 (TTNTATLELDLVEVKVHFKDVYAYR) are Extracellular-facing. A helical membrane pass occupies residues 58-78 (YMLATIVIGLAYTVLQIAFTL). Residues 79-97 (YYVATGNRMMSGDGNLAFD) are Cytoplasmic-facing. The helical transmembrane segment at 98 to 118 (FFGDKVISYILVTGAAAGFAS) threads the bilayer. The Extracellular portion of the chain corresponds to 119 to 144 (TKDIKPVFSGSGDFDAFINKGYASAS). Residues 145–165 (LLLIGFVCTAVLSVFSSYALP) form a helical membrane-spanning segment. Residues 166 to 168 (KQV) are Cytoplasmic-facing.

This sequence belongs to the Casparian strip membrane proteins (CASP) family. In terms of assembly, homodimer and heterodimers.

It localises to the cell membrane. The protein is CASP-like protein 4D1 of Ricinus communis (Castor bean).